We begin with the raw amino-acid sequence, 373 residues long: Transaldolase (373 aa).

Lysine 143 (schiff-base intermediate with substrate) is an active-site residue.

This sequence belongs to the transaldolase family. Type 2 subfamily.

It localises to the cytoplasm. The catalysed reaction is D-sedoheptulose 7-phosphate + D-glyceraldehyde 3-phosphate = D-erythrose 4-phosphate + beta-D-fructose 6-phosphate. It functions in the pathway carbohydrate degradation; pentose phosphate pathway; D-glyceraldehyde 3-phosphate and beta-D-fructose 6-phosphate from D-ribose 5-phosphate and D-xylulose 5-phosphate (non-oxidative stage): step 2/3. Transaldolase is important for the balance of metabolites in the pentose-phosphate pathway. The protein is Transaldolase of Mycolicibacterium paratuberculosis (strain ATCC BAA-968 / K-10) (Mycobacterium paratuberculosis).